Consider the following 409-residue polypeptide: Adenosine deaminase (409 aa).

Zn(2+) contacts are provided by histidine 65, histidine 67, histidine 207, and aspartate 314.

Belongs to the metallo-dependent hydrolases superfamily. Requires Zn(2+) as cofactor.

It carries out the reaction adenosine + H2O + H(+) = inosine + NH4(+). Functionally, catalyzes the deamination of adenosine into inosine. Is also able to deaminate adenine, but with considerably less efficiency. Is not active toward 6-chloroadenine. In Helicobacter pylori (strain ATCC 700392 / 26695) (Campylobacter pylori), this protein is Adenosine deaminase.